The chain runs to 263 residues: MRIALGVEYDGARFHGWQRQNEVISVQQHLEEALTRIANEPIRVVCAGRTDAGVHATGQVVHFETTSQRPDRAWTLGINTYLPDTISVRWVKAVPEDFHARFSATARRYRYIIYNNTLRSGILANGVTHIYGDLDHELMHEAAQKLVGKHDFSSFRAVNCQAKTATRTMSHIRVKRMGDYIVIDVQANAFLHHMVRNITGTLVAIGHKEKPVEWVDELLEVKDRTKAGITALPNGLYLVHVTYPETFALPKLKMGPLFLADDF.

The Nucleophile role is filled by aspartate 51. Tyrosine 109 provides a ligand contact to substrate.

The protein belongs to the tRNA pseudouridine synthase TruA family. As to quaternary structure, homodimer.

It carries out the reaction uridine(38/39/40) in tRNA = pseudouridine(38/39/40) in tRNA. Its function is as follows. Formation of pseudouridine at positions 38, 39 and 40 in the anticodon stem and loop of transfer RNAs. This is tRNA pseudouridine synthase A from Pseudoalteromonas atlantica (strain T6c / ATCC BAA-1087).